Consider the following 311-residue polypeptide: 2-methoxy-6-polyprenyl-1,4-benzoquinol methylase, mitochondrial (311 aa).

The N-terminal 29 residues, 1 to 29 (MAAGLCPGRALLSRRGGALWALLGTARGR), are a transit peptide targeting the mitochondrion. S-adenosyl-L-methionine-binding positions include Thr100, Asp155, and 183-184 (NA).

It belongs to the class I-like SAM-binding methyltransferase superfamily. MenG/UbiE family. Component of a multi-subunit COQ enzyme complex, composed of at least COQ3, COQ4, COQ5, COQ6, COQ7 and COQ9.

The protein resides in the mitochondrion inner membrane. It carries out the reaction a 2-methoxy-6-(all-trans-polyprenyl)benzene-1,4-diol + S-adenosyl-L-methionine = a 5-methoxy-2-methyl-3-(all-trans-polyprenyl)benzene-1,4-diol + S-adenosyl-L-homocysteine + H(+). It participates in cofactor biosynthesis; ubiquinone biosynthesis. Methyltransferase required for the conversion of 2-polyprenyl-6-methoxy-1,4-benzoquinol (DDMQH2) to 2-polyprenyl-3-methyl-6-methoxy-1,4-benzoquinol (DMQH2). The chain is 2-methoxy-6-polyprenyl-1,4-benzoquinol methylase, mitochondrial from Gallus gallus (Chicken).